A 61-amino-acid chain; its full sequence is Early E3 6.4 kDa protein (61 aa).

Positions M1–S25 are disordered.

In Homo sapiens (Human), this protein is Early E3 6.4 kDa protein.